The following is a 243-amino-acid chain: GrpE protein homolog, mitochondrial (243 aa).

The disordered stretch occupies residues 42–75; the sequence is TEASKKEGKEDKAEAQGSQEPETAAETNKEAEGA. The span at 44–55 shows a compositional bias: basic and acidic residues; that stretch reads ASKKEGKEDKAE.

Belongs to the GrpE family. Component of the PAM complex, at least composed of mtHsp70, MGE1, TIM44, PAM16, PAM17 and PAM18.

Its subcellular location is the mitochondrion matrix. Its function is as follows. Essential component of the PAM complex, a complex required for the translocation of transit peptide-containing proteins from the inner membrane into the mitochondrial matrix in an ATP-dependent manner. Seems to control the nucleotide-dependent binding of SSC1 to substrate proteins. The protein is GrpE protein homolog, mitochondrial (mge1) of Debaryomyces hansenii (strain ATCC 36239 / CBS 767 / BCRC 21394 / JCM 1990 / NBRC 0083 / IGC 2968) (Yeast).